The chain runs to 741 residues: Probable basic-leucine zipper transcription factor I (741 aa).

Positions 77 to 117 form a coiled coil; that stretch reads QIIEQIQFLQQQQQQQHDQIQQQLHNFQQQYQQQYQQRQQQ. Low complexity-rich tracts occupy residues 153–164, 172–237, 277–290, and 381–390; these read QQPPQSLQQQQQ, PQQQ…QIQK, IQQQ…IQQK, and QQQQQQQQQQ. Disordered regions lie at residues 153–237, 277–305, and 349–390; these read QQPP…QIQK, IQQQ…SNSM, and KQKE…QQQQ. The region spanning 429 to 492 is the bZIP domain; that stretch reads ESKKSIKRIN…HEGGTMAILK (64 aa). Positions 431-432 are basic motif; that stretch reads KK. Positions 434-441 are leucine-zipper; it reads IKRINQNI.

This sequence belongs to the bZIP family.

It is found in the nucleus. Functionally, probable transcriptional regulator. The chain is Probable basic-leucine zipper transcription factor I (bzpI) from Dictyostelium discoideum (Social amoeba).